The chain runs to 162 residues: Gas vesicle protein I (162 aa).

The tract at residues 1–162 (MTGKQHQKHE…AERQRGGADE (162 aa)) is disordered. 2 stretches are compositionally biased toward basic and acidic residues: residues 22–37 (INRD…QREK) and 47–64 (RQSE…HDTQ). Polar residues-rich tracts occupy residues 65-74 (SETQRGTQSK) and 81-110 (TGGT…SHST). 2 stretches are compositionally biased toward basic and acidic residues: residues 122–142 (ARER…EDKS) and 151–162 (PKAERQRGGADE).

Belongs to the gas vesicle GvpI family. As to quaternary structure, gvpF to GvpM interact with each other in vitro, and may form multi-subunit complex(es). Interacts with GvpC and GvpO.

The protein localises to the gas vesicle. Its function is as follows. Proteins GvpF to GvpM might be involved in nucleating gas vesicle formation. A minor component of the gas vesicle. Gas vesicles are hollow, gas filled proteinaceous nanostructures found in some microorganisms. They allow positioning of halobacteria at the optimal depth for growth in the poorly aerated, shallow brine pools of their habitat. Expression of a 9.5 kb mc-vac DNA fragment containing 2 divergently transcribed regions (gvpD-gvpE-gvpF-gvpG-gvpH-gvpI-gvpJ-gvpK-gvpL-gvpM and gvpA-gvpC-gvpN-gvpO) allows H.volcanii to produce gas vesicles. The chain is Gas vesicle protein I from Haloferax mediterranei (strain ATCC 33500 / DSM 1411 / JCM 8866 / NBRC 14739 / NCIMB 2177 / R-4) (Halobacterium mediterranei).